Reading from the N-terminus, the 828-residue chain is DNA gyrase subunit A (828 aa).

The 464-residue stretch at 38–501 (LPDARDGLKP…SYESIDTEDL (464 aa)) folds into the Topo IIA-type catalytic domain. The active-site O-(5'-phospho-DNA)-tyrosine intermediate is Y126. The GyrA-box motif lies at 528–534 (QNRGGKG).

It belongs to the type II topoisomerase GyrA/ParC subunit family. Heterotetramer, composed of two GyrA and two GyrB chains. In the heterotetramer, GyrA contains the active site tyrosine that forms a transient covalent intermediate with DNA, while GyrB binds cofactors and catalyzes ATP hydrolysis.

The protein resides in the cytoplasm. It catalyses the reaction ATP-dependent breakage, passage and rejoining of double-stranded DNA.. Its function is as follows. A type II topoisomerase that negatively supercoils closed circular double-stranded (ds) DNA in an ATP-dependent manner to modulate DNA topology and maintain chromosomes in an underwound state. Negative supercoiling favors strand separation, and DNA replication, transcription, recombination and repair, all of which involve strand separation. Also able to catalyze the interconversion of other topological isomers of dsDNA rings, including catenanes and knotted rings. Type II topoisomerases break and join 2 DNA strands simultaneously in an ATP-dependent manner. The chain is DNA gyrase subunit A from Helicobacter pylori (strain J99 / ATCC 700824) (Campylobacter pylori J99).